We begin with the raw amino-acid sequence, 387 residues long: Erythronate-4-phosphate dehydrogenase (387 aa).

The substrate site is built by serine 45 and threonine 67. Residue aspartate 147 coordinates NAD(+). Arginine 208 is an active-site residue. Aspartate 232 provides a ligand contact to NAD(+). The active site involves glutamate 237. The active-site Proton donor is the histidine 254. Glycine 257 serves as a coordination point for NAD(+). Residue tyrosine 258 coordinates substrate.

This sequence belongs to the D-isomer specific 2-hydroxyacid dehydrogenase family. PdxB subfamily. As to quaternary structure, homodimer.

The protein resides in the cytoplasm. It carries out the reaction 4-phospho-D-erythronate + NAD(+) = (R)-3-hydroxy-2-oxo-4-phosphooxybutanoate + NADH + H(+). It participates in cofactor biosynthesis; pyridoxine 5'-phosphate biosynthesis; pyridoxine 5'-phosphate from D-erythrose 4-phosphate: step 2/5. In terms of biological role, catalyzes the oxidation of erythronate-4-phosphate to 3-hydroxy-2-oxo-4-phosphonooxybutanoate. This is Erythronate-4-phosphate dehydrogenase from Shewanella woodyi (strain ATCC 51908 / MS32).